We begin with the raw amino-acid sequence, 109 residues long: Large ribosomal subunit protein uL23 (109 aa).

It belongs to the universal ribosomal protein uL23 family. As to quaternary structure, part of the 50S ribosomal subunit. Contacts protein L29, and trigger factor when it is bound to the ribosome.

In terms of biological role, one of the early assembly proteins it binds 23S rRNA. One of the proteins that surrounds the polypeptide exit tunnel on the outside of the ribosome. Forms the main docking site for trigger factor binding to the ribosome. The sequence is that of Large ribosomal subunit protein uL23 from Prosthecochloris aestuarii (strain DSM 271 / SK 413).